The sequence spans 449 residues: MGSDVRDLNALLPAVSSLGGGGGGCGLPVSGARQWAPVLDFAPPGASAYGSLGGPAPPPAPPPPPPPPHSFIKQEPSWGGAEPHEEQCLSAFTLHFSGQFTGTAGACRYGPFGPPPPSQASSGQARMFPNAPYLPSCLESQPTIRNQGYSTVTFDGAPSYGHTPSHHAAQFPNHSFKHEDPMGQQGSLGEQQYSVPPPVYGCHTPTDSCTGSQALLLRTPYSSDNLYQMTSQLECMTWNQMNLGATLKGMAAGSSSSVKWTEGQSNHGIGYESENHTAPILCGAQYRIHTHGVFRGIQDVRRVSGVAPTLVRSASETSEKRPFMCAYPGCNKRYFKLSHLQMHSRKHTGEKPYQCDFKDCERRFSRSDQLKRHQRRHTGVKPFQCKTCQRKFSRSDHLKTHTRTHTGKTSEKPFSCRWHSCQKKFARSDELVRHHNMHQRNMTKLHVAL.

Positions 49 to 84 (YGSLGGPAPPPAPPPPPPPPHSFIKQEPSWGGAEPH) are disordered. The segment covering 55–69 (PAPPPAPPPPPPPPH) has biased composition (pro residues). Residues K73 and K177 each participate in a glycyl lysine isopeptide (Lys-Gly) (interchain with G-Cter in SUMO) cross-link. The 9aaTAD signature appears at 236 to 244 (MTWNQMNLG). 3 C2H2-type zinc fingers span residues 323–347 (FMCAYPGCNKRYFKLSHLQMHSRKH), 353–377 (YQCDFKDCERRFSRSDQLKRHQRRH), and 383–405 (FQCKTCQRKFSRSDHLKTHTRTH). 2 important for interaction with target DNA regions span residues 367–381 (SDQLKRHQRRHTGVK) and 393–401 (SRSDHLKTH). Residues 408-410 (KTS) carry the KTS motif motif. Residues 414–438 (FSCRWHSCQKKFARSDELVRHHNMH) form a C2H2-type 4 zinc finger. K444 participates in a covalent cross-link: Glycyl lysine isopeptide (Lys-Gly) (interchain with G-Cter in SUMO2).

It belongs to the EGR C2H2-type zinc-finger protein family. In terms of assembly, interacts with ZNF224 via the zinc-finger region. Interacts with WTAP, AMER1 and SRY. Interacts with RBM4. Homodimer. Interacts with WTIP. Interacts with actively translating polysomes. Detected in nuclear ribonucleoprotein (mRNP) particles. Interacts with U2AF2. Interacts with HNRNPU via the zinc-finger region. Isoform 1 and isoform 3 interacts with CITED2. Detected in neurons of the embryonic dorsal root ganglion and in Sertoli cells of the adult testis (at protein level). Detected in kidney.

The protein resides in the nucleus speckle. It is found in the nucleus. Its subcellular location is the nucleoplasm. It localises to the nucleolus. The protein localises to the cytoplasm. Transcription factor that plays an important role in cellular development and cell survival. Recognizes and binds to the DNA sequence 5'-GCG(T/G)GGGCG-3'. Regulates the expression of numerous target genes, including EPO. Plays an essential role for development of the urogenital system. It has a tumor suppressor as well as an oncogenic role in tumor formation. Function may be isoform-specific: isoforms lacking the KTS motif may act as transcription factors. Isoforms containing the KTS motif may bind mRNA and play a role in mRNA metabolism or splicing. Isoform 1 has lower affinity for DNA, and can bind RNA. The sequence is that of Wilms tumor protein homolog (Wt1) from Mus musculus (Mouse).